Here is a 248-residue protein sequence, read N- to C-terminus: Ubiquinone/menaquinone biosynthesis C-methyltransferase UbiE (248 aa).

S-adenosyl-L-methionine is bound by residues T71, D92, and 120–121 (DA).

Belongs to the class I-like SAM-binding methyltransferase superfamily. MenG/UbiE family.

It carries out the reaction a 2-demethylmenaquinol + S-adenosyl-L-methionine = a menaquinol + S-adenosyl-L-homocysteine + H(+). The catalysed reaction is a 2-methoxy-6-(all-trans-polyprenyl)benzene-1,4-diol + S-adenosyl-L-methionine = a 5-methoxy-2-methyl-3-(all-trans-polyprenyl)benzene-1,4-diol + S-adenosyl-L-homocysteine + H(+). The protein operates within quinol/quinone metabolism; menaquinone biosynthesis; menaquinol from 1,4-dihydroxy-2-naphthoate: step 2/2. It functions in the pathway cofactor biosynthesis; ubiquinone biosynthesis. In terms of biological role, methyltransferase required for the conversion of demethylmenaquinol (DMKH2) to menaquinol (MKH2) and the conversion of 2-polyprenyl-6-methoxy-1,4-benzoquinol (DDMQH2) to 2-polyprenyl-3-methyl-6-methoxy-1,4-benzoquinol (DMQH2). The chain is Ubiquinone/menaquinone biosynthesis C-methyltransferase UbiE from Methylococcus capsulatus (strain ATCC 33009 / NCIMB 11132 / Bath).